The sequence spans 347 residues: N-acetyl-gamma-glutamyl-phosphate reductase (347 aa).

Cys153 is a catalytic residue.

Belongs to the NAGSA dehydrogenase family. Type 1 subfamily.

Its subcellular location is the cytoplasm. The catalysed reaction is N-acetyl-L-glutamate 5-semialdehyde + phosphate + NADP(+) = N-acetyl-L-glutamyl 5-phosphate + NADPH + H(+). The protein operates within amino-acid biosynthesis; L-arginine biosynthesis; N(2)-acetyl-L-ornithine from L-glutamate: step 3/4. In terms of biological role, catalyzes the NADPH-dependent reduction of N-acetyl-5-glutamyl phosphate to yield N-acetyl-L-glutamate 5-semialdehyde. The polypeptide is N-acetyl-gamma-glutamyl-phosphate reductase (Mycobacterium leprae (strain Br4923)).